Here is a 212-residue protein sequence, read N- to C-terminus: Peptide methionine sulfoxide reductase MsrA (212 aa).

The active site involves Cys52.

It belongs to the MsrA Met sulfoxide reductase family.

The catalysed reaction is L-methionyl-[protein] + [thioredoxin]-disulfide + H2O = L-methionyl-(S)-S-oxide-[protein] + [thioredoxin]-dithiol. It catalyses the reaction [thioredoxin]-disulfide + L-methionine + H2O = L-methionine (S)-S-oxide + [thioredoxin]-dithiol. Has an important function as a repair enzyme for proteins that have been inactivated by oxidation. Catalyzes the reversible oxidation-reduction of methionine sulfoxide in proteins to methionine. This is Peptide methionine sulfoxide reductase MsrA from Yersinia pseudotuberculosis serotype O:1b (strain IP 31758).